Consider the following 72-residue polypeptide: Bowman-Birk type proteinase inhibitor (72 aa).

Intrachain disulfides connect Cys8–Cys61, Cys9–Cys24, Cys12–Cys57, Cys14–Cys22, Cys31–Cys38, Cys35–Cys50, and Cys40–Cys48.

The protein belongs to the Bowman-Birk serine protease inhibitor family.

This inhibitor has two domains, each with separate antiprotease activity. 1 mole of inhibitor inhibits either 1 mole of trypsin or 2 moles of chymotrypsin, stoichiometrically. The protein is Bowman-Birk type proteinase inhibitor of Vicia sativa subsp. nigra (Common vetch).